The primary structure comprises 375 residues: Queuine tRNA-ribosyltransferase (375 aa).

D90 acts as the Proton acceptor in catalysis. Residues 90 to 94, D144, Q190, and G217 contribute to the substrate site; that span reads DSGGF. Residues 248-254 are RNA binding; that stretch reads GIGTPHY. D267 serves as the catalytic Nucleophile. An RNA binding; important for wobble base 34 recognition region spans residues 272–276; it reads ARITR. C305, C307, C310, and H336 together coordinate Zn(2+).

This sequence belongs to the queuine tRNA-ribosyltransferase family. As to quaternary structure, homodimer. Within each dimer, one monomer is responsible for RNA recognition and catalysis, while the other monomer binds to the replacement base PreQ1. Requires Zn(2+) as cofactor.

The enzyme catalyses 7-aminomethyl-7-carbaguanine + guanosine(34) in tRNA = 7-aminomethyl-7-carbaguanosine(34) in tRNA + guanine. Its pathway is tRNA modification; tRNA-queuosine biosynthesis. In terms of biological role, catalyzes the base-exchange of a guanine (G) residue with the queuine precursor 7-aminomethyl-7-deazaguanine (PreQ1) at position 34 (anticodon wobble position) in tRNAs with GU(N) anticodons (tRNA-Asp, -Asn, -His and -Tyr). Catalysis occurs through a double-displacement mechanism. The nucleophile active site attacks the C1' of nucleotide 34 to detach the guanine base from the RNA, forming a covalent enzyme-RNA intermediate. The proton acceptor active site deprotonates the incoming PreQ1, allowing a nucleophilic attack on the C1' of the ribose to form the product. After dissociation, two additional enzymatic reactions on the tRNA convert PreQ1 to queuine (Q), resulting in the hypermodified nucleoside queuosine (7-(((4,5-cis-dihydroxy-2-cyclopenten-1-yl)amino)methyl)-7-deazaguanosine). The chain is Queuine tRNA-ribosyltransferase from Borreliella burgdorferi (strain ATCC 35210 / DSM 4680 / CIP 102532 / B31) (Borrelia burgdorferi).